The following is a 289-amino-acid chain: MVTKRVQRMMSAAAACIPLLLGSPTLYAQTSAVQQKLAALEKSSGGRLGVALIDTADNTQVLYRGDERFPMCSTSKVMAAAAVLKQSETQKQLLNQPVEIKPADLVNYNPIAEKHVNGTMTLAELSAAALQYSDNTAMNKLIAQLGGPGGVTAFARAIGDETFRLDRTEPTLNTAIPGDPRDTTTARAGADVASLRWVMRWAKPSGAVGDVAQRQYDRAAGIRAGLPTSWTVGDKTGSGDYGTTNDIAVIWPQGRAPLVLVTYFTQPQQNAESRRDVLASAARIIAEGL.

A signal peptide spans 1 to 28; it reads MVTKRVQRMMSAAAACIPLLLGSPTLYA. S73 (acyl-ester intermediate) is an active-site residue. 235-237 provides a ligand contact to substrate; it reads KTG.

Belongs to the class-A beta-lactamase family.

It carries out the reaction a beta-lactam + H2O = a substituted beta-amino acid. Its activity is regulated as follows. Inhibited 16-fold better by the beta-lactamase inhibitor tazobactam than by clavulanic acid. Its function is as follows. Hydrolyzes beta-lactam antibiotics such as penicillin G, carbenicillin, cephaloridine, cefoxitin, cefotaxime, ceftazidime, and aztreonam. Has especially increased relative hydrolysis rates for cephalothin, cephaloridine, cefotaxime and ceftizoxime. The polypeptide is Beta-lactamase Toho-2 (bla) (Escherichia coli).